Reading from the N-terminus, the 509-residue chain is Protein disulfide-isomerase (509 aa).

An N-terminal signal peptide occupies residues 1–18; sequence MLRRAVLCLALAVTAGWA. One can recognise a Thioredoxin 1 domain in the interval 19–135; that stretch reads WAAEEEDNVL…IVNWLKKRTG (117 aa). Active-site nucleophile residues include C54 and C57. C54 and C57 are oxidised to a cystine. Residues K223 and K272 each carry the N6-succinyllysine modification. S332 and S358 each carry phosphoserine. Residues 347 to 476 form the Thioredoxin 2 domain; it reads FLEGKIKPHL…FKKFLESGGQ (130 aa). Residues C398 and C401 each act as nucleophile in the active site. Cysteines 398 and 401 form a disulfide. Residue S428 is modified to Phosphoserine. The interval 471 to 509 is disordered; sequence LESGGQDGAGDEDGLEDLEEAEEPDLEEDDDQKAVRDEL. Over residues 479-501 the composition is skewed to acidic residues; sequence AGDEDGLEDLEEAEEPDLEEDDD. Residues 506–509 carry the Prevents secretion from ER motif; the sequence is RDEL.

It belongs to the protein disulfide isomerase family. As to quaternary structure, heterodimer; heterodimerizes with the protein microsomal triglyceride transfer MTTP. Homodimer. Monomers and homotetramers may also occur. Interacts with P4HA2, forming a heterotetramer consisting of 2 alpha subunits (P4HA2) and 2 beta (P4HB), where P4HB plays the role of a structural subunit; this tetramer catalyzes the formation of 4-hydroxyproline in collagen. Also constitutes the structural subunit of the microsomal triacylglycerol transfer protein MTTP in mammalian cells. Stabilizes both enzymes and retain them in the ER without contributing to the catalytic activity. Binds UBQLN1. Interacts with ERO1B. Interacts with ILDR2. Interacts with ERN1/IRE1A (via N-terminus); the interaction is enhanced by phosphorylation of P4HB by FAM20C in response to endoplasmic reticulum stress and results in attenuation of ERN1 activity. In terms of processing, phosphorylation of Ser-358 by FAM20C is induced by endoplasmic reticulum stress and results in a functional switch from oxidoreductase to molecular chaperone. It also promotes interaction with ERN1.

Its subcellular location is the endoplasmic reticulum. The protein localises to the endoplasmic reticulum lumen. It localises to the melanosome. The protein resides in the cell membrane. The enzyme catalyses Catalyzes the rearrangement of -S-S- bonds in proteins.. Its function is as follows. This multifunctional protein catalyzes the formation, breakage and rearrangement of disulfide bonds. At the cell surface, seems to act as a reductase that cleaves disulfide bonds of proteins attached to the cell. May therefore cause structural modifications of exofacial proteins. Inside the cell, seems to form/rearrange disulfide bonds of nascent proteins. At high concentrations and following phosphorylation by FAM20C, functions as a chaperone that inhibits aggregation of misfolded proteins. At low concentrations, facilitates aggregation (anti-chaperone activity). May be involved with other chaperones in the structural modification of the TG precursor in hormone biogenesis. Also acts as a structural subunit of various enzymes such as prolyl 4-hydroxylase and microsomal triacylglycerol transfer protein MTTP. Receptor for LGALS9; the interaction retains P4HB at the cell surface of Th2 T helper cells, increasing disulfide reductase activity at the plasma membrane, altering the plasma membrane redox state and enhancing cell migration. In Oryctolagus cuniculus (Rabbit), this protein is Protein disulfide-isomerase (P4HB).